Reading from the N-terminus, the 235-residue chain is MMIMNNFDEKKLIQEFSKIQSELSPRIKLENNFQIEEIQFIAGVDLAYWNVNKTKYGTCCIVIIDYGTKEVVEKVYSYGEIPIPYIPGFLAFRELPLIIEAVKKLTKQPDIYFFDGNGYLHYRHMGIATHASFLLNKPTIGVAKSYLKIRDVDFIMPENLKGSYTDIVINNEVYGRTLRTTKNVKPIFVSCGNWIDLDTSTEIVMNCINNESRLPIPVRLADLETHKMRKKLMEG.

2 residues coordinate Mg(2+): Asp-45 and Asp-115.

This sequence belongs to the endonuclease V family. Mg(2+) serves as cofactor.

It is found in the cytoplasm. The catalysed reaction is Endonucleolytic cleavage at apurinic or apyrimidinic sites to products with a 5'-phosphate.. Functionally, DNA repair enzyme involved in the repair of deaminated bases. Selectively cleaves double-stranded DNA at the second phosphodiester bond 3' to a deoxyinosine leaving behind the intact lesion on the nicked DNA. The chain is Endonuclease V from Bacillus thuringiensis subsp. konkukian (strain 97-27).